Reading from the N-terminus, the 340-residue chain is Phosphoribosylformylglycinamidine cyclo-ligase (340 aa).

Belongs to the AIR synthase family.

It localises to the cytoplasm. It catalyses the reaction 2-formamido-N(1)-(5-O-phospho-beta-D-ribosyl)acetamidine + ATP = 5-amino-1-(5-phospho-beta-D-ribosyl)imidazole + ADP + phosphate + H(+). Its pathway is purine metabolism; IMP biosynthesis via de novo pathway; 5-amino-1-(5-phospho-D-ribosyl)imidazole from N(2)-formyl-N(1)-(5-phospho-D-ribosyl)glycinamide: step 2/2. The sequence is that of Phosphoribosylformylglycinamidine cyclo-ligase from Streptococcus uberis (strain ATCC BAA-854 / 0140J).